A 187-amino-acid polypeptide reads, in one-letter code: Calcium and integrin-binding family member 2 (187 aa).

EF-hand domains lie at 66 to 101 (RENP…LCES), 103 to 138 (PREL…LTKS), and 144 to 179 (EVVL…APDF). 9 residues coordinate Ca(2+): Asp-116, Asn-118, Asp-120, Asp-127, Asp-157, Asp-159, Asp-161, Lys-163, and Asp-168.

In terms of assembly, monomer. Homodimer. Interacts with WHRN and MYO7A. Interacts with ITGA2B (via C-terminus cytoplasmic tail region); the interactions are stabilized/increased in a calcium and magnesium-dependent manner. Interacts with ITGA7 (via C-terminus cytoplasmic tail region); the interactions are stabilized/increased in a calcium and magnesium-dependent manner. Interacts with TMC1. Interacts with TMC2.

The protein localises to the cytoplasm. Its subcellular location is the cell projection. It localises to the stereocilium. The protein resides in the photoreceptor inner segment. It is found in the cilium. The protein localises to the photoreceptor outer segment. Its subcellular location is the cell membrane. It localises to the sarcolemma. In terms of biological role, calcium- and integrin-binding protein that plays a role in intracellular calcium homeostasis. Acts as an auxiliary subunit of the sensory mechanoelectrical transduction (MET) channel in hair cells. Essential for mechanoelectrical transduction (MET) currents in auditory hair cells and thereby required for hearing. Regulates the function of hair cell mechanotransduction by controlling the distribution of transmembrane channel-like proteins TMC1 and TMC2, and by regulating the function of the MET channels in hair cells. Required for the maintenance of auditory hair cell stereocilia bundle morphology and function and for hair-cell survival in the cochlea. Critical for proper photoreceptor cell maintenance and function. Plays a role in intracellular calcium homeostasis by decreasing ATP-induced calcium release. The chain is Calcium and integrin-binding family member 2 (Cib2) from Rattus norvegicus (Rat).